Consider the following 154-residue polypeptide: Immunity protein YwqK (154 aa).

As to quaternary structure, probably interacts with cognate toxin YwqJ but not with other non-cognate LXG toxins. The interaction inhibits the toxic activity of YwqJ.

The protein resides in the cytoplasm. In terms of biological role, immunity component of one of 6 LXG toxin-immunity modules in this strain. They promote kin selection, mediate competition in biofilms, and drive spatial segregation of different strains, indicating that LXG toxins may help avoid warfare between strains in biofilms. Mediates intercellular competition during biofilm formation; disruption of the operon disadvantages the bacteria, but overexpression of the cognate immunity protein restores growth in competition with wild-type. In situ neutralizes the toxic effect of cognate toxin YqcG. Probably neutralizes the ability to inhibit growth of cognate toxin YwqJ. Probably does not have immunity protein activity on other LXG toxins. The protein is Immunity protein YwqK (ywqK) of Bacillus subtilis (strain 168).